The chain runs to 203 residues: Orotate phosphoribosyltransferase (203 aa).

5-phospho-alpha-D-ribose 1-diphosphate is bound by residues R94, K98, H100, and 120–128; that span reads EDLISTGGS. S124 is a binding site for orotate.

The protein belongs to the purine/pyrimidine phosphoribosyltransferase family. PyrE subfamily. As to quaternary structure, homodimer. Requires Mg(2+) as cofactor.

The catalysed reaction is orotidine 5'-phosphate + diphosphate = orotate + 5-phospho-alpha-D-ribose 1-diphosphate. The protein operates within pyrimidine metabolism; UMP biosynthesis via de novo pathway; UMP from orotate: step 1/2. Its function is as follows. Catalyzes the transfer of a ribosyl phosphate group from 5-phosphoribose 1-diphosphate to orotate, leading to the formation of orotidine monophosphate (OMP). The polypeptide is Orotate phosphoribosyltransferase (Staphylococcus epidermidis (strain ATCC 35984 / DSM 28319 / BCRC 17069 / CCUG 31568 / BM 3577 / RP62A)).